Here is a 618-residue protein sequence, read N- to C-terminus: 1-deoxy-D-xylulose-5-phosphate synthase (618 aa).

Thiamine diphosphate-binding positions include H75 and 116-118 (GHS). Position 147 (D147) interacts with Mg(2+). Residues 148–149 (GA), N176, Y283, and E364 each bind thiamine diphosphate. N176 contributes to the Mg(2+) binding site.

Belongs to the transketolase family. DXPS subfamily. In terms of assembly, homodimer. Mg(2+) is required as a cofactor. Thiamine diphosphate serves as cofactor.

It catalyses the reaction D-glyceraldehyde 3-phosphate + pyruvate + H(+) = 1-deoxy-D-xylulose 5-phosphate + CO2. It functions in the pathway metabolic intermediate biosynthesis; 1-deoxy-D-xylulose 5-phosphate biosynthesis; 1-deoxy-D-xylulose 5-phosphate from D-glyceraldehyde 3-phosphate and pyruvate: step 1/1. Functionally, catalyzes the acyloin condensation reaction between C atoms 2 and 3 of pyruvate and glyceraldehyde 3-phosphate to yield 1-deoxy-D-xylulose-5-phosphate (DXP). This is 1-deoxy-D-xylulose-5-phosphate synthase from Thiobacillus denitrificans (strain ATCC 25259 / T1).